The primary structure comprises 469 residues: 3-isopropylmalate dehydratase large subunit (469 aa).

[4Fe-4S] cluster contacts are provided by Cys-347, Cys-410, and Cys-413.

Belongs to the aconitase/IPM isomerase family. LeuC type 1 subfamily. As to quaternary structure, heterodimer of LeuC and LeuD. It depends on [4Fe-4S] cluster as a cofactor.

It carries out the reaction (2R,3S)-3-isopropylmalate = (2S)-2-isopropylmalate. The protein operates within amino-acid biosynthesis; L-leucine biosynthesis; L-leucine from 3-methyl-2-oxobutanoate: step 2/4. Catalyzes the isomerization between 2-isopropylmalate and 3-isopropylmalate, via the formation of 2-isopropylmaleate. This is 3-isopropylmalate dehydratase large subunit from Burkholderia lata (strain ATCC 17760 / DSM 23089 / LMG 22485 / NCIMB 9086 / R18194 / 383).